The following is a 400-amino-acid chain: Protein screw (400 aa).

An N-terminal signal peptide occupies residues 1-16 (MLNVFFLTSLFYAASA). The propeptide occupies 17 to 277 (TTYVTTNNHI…RFKRDLEKRR (261 aa)). N-linked (GlcNAc...) asparagine glycans are attached at residues Asn165, Asn189, Asn201, Asn304, and Asn342. 3 disulfides stabilise this stretch: Cys300–Cys365, Cys329–Cys397, and Cys333–Cys399.

The protein belongs to the TGF-beta family. As to quaternary structure, heterodimers of scw/dpp are the active subunit, dpp/dpp homodimers elicit a basal response and scw/scw homodimers alone are ineffective in specifying a dorsal pattern. In terms of tissue distribution, ubiquitously expressed during early stages of embryogenesis, but the effect on development appears graded and is restricted to the dorsal side of the embryo.

The protein localises to the secreted. In terms of biological role, part of the signal that specifies dorsal cell fates in the embryo. Acts together with dpp. This chain is Protein screw (scw), found in Drosophila melanogaster (Fruit fly).